The chain runs to 100 residues: UPF0213 protein YhbQ (100 aa).

In terms of domain architecture, GIY-YIG spans 2-77; it reads TPWFLYLIRT…KQLTKRQKER (76 aa).

This sequence belongs to the UPF0213 family.

This chain is UPF0213 protein YhbQ, found in Shigella dysenteriae serotype 1 (strain Sd197).